A 324-amino-acid polypeptide reads, in one-letter code: dITP/XTP pyrophosphatase (324 aa).

Residues 1-127 (MTKTIFESKT…KNDNNFGDTI (127 aa)) are unknown. Residues 128-324 (LIATHNEGKT…EVFPKWQLEN (197 aa)) form an NTP pyrophosphatase region. Residue 131–136 (THNEGK) participates in substrate binding. Mg(2+)-binding residues include glutamate 164 and aspartate 193. The active-site Proton acceptor is aspartate 193. Residues serine 194, 277 to 280 (FGYD), lysine 300, and 305 to 306 (HR) each bind substrate.

The protein belongs to the HAM1 NTPase family. In terms of assembly, homodimer. Mg(2+) serves as cofactor.

It catalyses the reaction XTP + H2O = XMP + diphosphate + H(+). It carries out the reaction dITP + H2O = dIMP + diphosphate + H(+). The enzyme catalyses ITP + H2O = IMP + diphosphate + H(+). Its function is as follows. Pyrophosphatase that catalyzes the hydrolysis of nucleoside triphosphates to their monophosphate derivatives, with a high preference for the non-canonical purine nucleotides XTP (xanthosine triphosphate), dITP (deoxyinosine triphosphate) and ITP. Seems to function as a house-cleaning enzyme that removes non-canonical purine nucleotides from the nucleotide pool, thus preventing their incorporation into DNA/RNA and avoiding chromosomal lesions. The protein is dITP/XTP pyrophosphatase of Streptococcus agalactiae serotype III (strain NEM316).